Here is a 227-residue protein sequence, read N- to C-terminus: Urease subunit gamma/beta (227 aa).

The segment at 1–101 (MRLTPTERDR…LAVVTDPIGG (101 aa)) is urease gamma. The tract at residues 102–227 (GLGDQAPGAL…ACGYLGVEQR (126 aa)) is urease beta.

The protein in the N-terminal section; belongs to the urease gamma subunit family. It in the C-terminal section; belongs to the urease beta subunit family. Heterohexamer of 3 UreC (alpha) and 3 UreAB (gamma/beta) subunits.

It localises to the cytoplasm. It carries out the reaction urea + 2 H2O + H(+) = hydrogencarbonate + 2 NH4(+). Its pathway is nitrogen metabolism; urea degradation; CO(2) and NH(3) from urea (urease route): step 1/1. The protein is Urease subunit gamma/beta of Streptomyces avermitilis (strain ATCC 31267 / DSM 46492 / JCM 5070 / NBRC 14893 / NCIMB 12804 / NRRL 8165 / MA-4680).